Consider the following 31-residue polypeptide: Gamma-conotoxin-like As7a (31 aa).

Cystine bridges form between C2/C16, C9/C20, and C15/C31. 4-carboxyglutamate is present on E14.

The protein belongs to the conotoxin O1 superfamily. In terms of tissue distribution, expressed by the venom duct.

The protein localises to the secreted. In terms of biological role, gamma-conotoxins may act on voltage-gated non-specific cation pacemaker channels (HCN). Elicits toxic effects in the freshwater snail Pomacea paludosa after intramuscular injection, but it has no effect when injected intracerebrally into mice. This chain is Gamma-conotoxin-like As7a, found in Conus cancellatus (Cancellate cone).